The following is a 78-amino-acid chain: Small ribosomal subunit protein bS16c (78 aa).

Belongs to the bacterial ribosomal protein bS16 family.

The protein resides in the plastid. It is found in the chloroplast. This chain is Small ribosomal subunit protein bS16c, found in Phaeodactylum tricornutum (strain CCAP 1055/1).